The chain runs to 406 residues: Succinylornithine transaminase (406 aa).

Lysine 252 is subject to N6-(pyridoxal phosphate)lysine.

The protein belongs to the class-III pyridoxal-phosphate-dependent aminotransferase family. AstC subfamily. Requires pyridoxal 5'-phosphate as cofactor.

The enzyme catalyses N(2)-succinyl-L-ornithine + 2-oxoglutarate = N-succinyl-L-glutamate 5-semialdehyde + L-glutamate. It participates in amino-acid degradation; L-arginine degradation via AST pathway; L-glutamate and succinate from L-arginine: step 3/5. Catalyzes the transamination of N(2)-succinylornithine and alpha-ketoglutarate into N(2)-succinylglutamate semialdehyde and glutamate. Can also act as an acetylornithine aminotransferase. In Escherichia fergusonii (strain ATCC 35469 / DSM 13698 / CCUG 18766 / IAM 14443 / JCM 21226 / LMG 7866 / NBRC 102419 / NCTC 12128 / CDC 0568-73), this protein is Succinylornithine transaminase.